The chain runs to 130 residues: MTRIKRGYIARKRRTKIRLFTSSFRGAHSRLTRTITQQKIKALVSAHRDRDRKKRDFRGLWISRINAVIRGNIKVYYIYSNLVYSLYTGQLLLNRKIVAQIAILKQNCLFMIANDIIKTKNPLRLYSGKV.

This sequence belongs to the bacterial ribosomal protein bL20 family.

Its subcellular location is the plastid. It is found in the chloroplast. In terms of biological role, binds directly to 23S ribosomal RNA and is necessary for the in vitro assembly process of the 50S ribosomal subunit. It is not involved in the protein synthesizing functions of that subunit. This is Large ribosomal subunit protein bL20c (rpl20) from Glycine max (Soybean).